The chain runs to 194 residues: Peptidyl-tRNA hydrolase (194 aa).

Tyr16 serves as a coordination point for tRNA. His21 acts as the Proton acceptor in catalysis. TRNA-binding residues include Phe67, Asn69, and Asn115.

The protein belongs to the PTH family. In terms of assembly, monomer.

It localises to the cytoplasm. It carries out the reaction an N-acyl-L-alpha-aminoacyl-tRNA + H2O = an N-acyl-L-amino acid + a tRNA + H(+). Hydrolyzes ribosome-free peptidyl-tRNAs (with 1 or more amino acids incorporated), which drop off the ribosome during protein synthesis, or as a result of ribosome stalling. Its function is as follows. Catalyzes the release of premature peptidyl moieties from peptidyl-tRNA molecules trapped in stalled 50S ribosomal subunits, and thus maintains levels of free tRNAs and 50S ribosomes. This is Peptidyl-tRNA hydrolase from Salmonella agona (strain SL483).